The chain runs to 429 residues: ATP-dependent RNA helicase RhlB (429 aa).

The Q motif motif lies at 9-37 (DKFAQMGLEPEVLAGLESKGFHYCTPIQA). In terms of domain architecture, Helicase ATP-binding spans 40–219 (LPLLVEGHDL…YEHMNHPEHV (180 aa)). 53–60 (AQTGTGKT) contacts ATP. Residues 165-168 (DEAD) carry the DEAD box motif. The Helicase C-terminal domain occupies 243–390 (KMLLLLSLME…VSKYDREALL (148 aa)). The disordered stretch occupies residues 399-429 (VFRNRQPVNRNMRDRQGGGNSNNRRRPPRKS).

The protein belongs to the DEAD box helicase family. RhlB subfamily. As to quaternary structure, component of the RNA degradosome, which is a multiprotein complex involved in RNA processing and mRNA degradation.

The protein resides in the cytoplasm. The catalysed reaction is ATP + H2O = ADP + phosphate + H(+). Functionally, DEAD-box RNA helicase involved in RNA degradation. Has RNA-dependent ATPase activity and unwinds double-stranded RNA. The polypeptide is ATP-dependent RNA helicase RhlB (Aeromonas hydrophila subsp. hydrophila (strain ATCC 7966 / DSM 30187 / BCRC 13018 / CCUG 14551 / JCM 1027 / KCTC 2358 / NCIMB 9240 / NCTC 8049)).